The chain runs to 449 residues: Probable magnetosome protein Mms48 (449 aa).

A signal peptide spans 1 to 18; the sequence is MLLRLIVLLIFMSPVVFA. A helical membrane pass occupies residues 40–60; it reads SNMPVLLAVILVVFLIFSALS. A TPR repeat occupies 323–356; that stretch reads PDGHLAAGEAAFAVQKWGVARRHIMAALKIAPDA.

It is found in the magnetosome membrane. Overexpression in wild-type cells increases the number of cells with double magnetosome chains significantly. The 4 genes of this operon collectively influence magnetosome size and number. The chain is Probable magnetosome protein Mms48 from Magnetospirillum gryphiswaldense (strain DSM 6361 / JCM 21280 / NBRC 15271 / MSR-1).